A 98-amino-acid polypeptide reads, in one-letter code: NADH-ubiquinone oxidoreductase chain 4L (98 aa).

The next 3 membrane-spanning stretches (helical) occupy residues 2 to 22 (TLTT…TLIF), 29 to 49 (TLLC…ITAL), and 61 to 81 (ITTL…LTMV).

Belongs to the complex I subunit 4L family. As to quaternary structure, core subunit of respiratory chain NADH dehydrogenase (Complex I) which is composed of 45 different subunits.

The protein localises to the mitochondrion inner membrane. It catalyses the reaction a ubiquinone + NADH + 5 H(+)(in) = a ubiquinol + NAD(+) + 4 H(+)(out). Core subunit of the mitochondrial membrane respiratory chain NADH dehydrogenase (Complex I) which catalyzes electron transfer from NADH through the respiratory chain, using ubiquinone as an electron acceptor. Part of the enzyme membrane arm which is embedded in the lipid bilayer and involved in proton translocation. The protein is NADH-ubiquinone oxidoreductase chain 4L (MT-ND4L) of Oxymycterus rufus (Red hocicudo).